The sequence spans 544 residues: Chaperonin GroEL (544 aa).

Residues 30–33, Lys-51, 87–91, Gly-415, 478–480, and Asp-494 each bind ATP; these read TLGP, DGTTT, and DVA. Residues 524-544 form a disordered region; that stretch reads PEKEKKPATPAGAGGMGDMEY. Over residues 535-544 the composition is skewed to gly residues; sequence GAGGMGDMEY.

This sequence belongs to the chaperonin (HSP60) family. In terms of assembly, forms a cylinder of 14 subunits composed of two heptameric rings stacked back-to-back. Interacts with the co-chaperonin GroES.

The protein localises to the cytoplasm. It catalyses the reaction ATP + H2O + a folded polypeptide = ADP + phosphate + an unfolded polypeptide.. Its function is as follows. Together with its co-chaperonin GroES, plays an essential role in assisting protein folding. The GroEL-GroES system forms a nano-cage that allows encapsulation of the non-native substrate proteins and provides a physical environment optimized to promote and accelerate protein folding. The protein is Chaperonin GroEL of Methylacidiphilum infernorum (isolate V4) (Methylokorus infernorum (strain V4)).